Consider the following 579-residue polypeptide: MVSAGSTINLFGNFRCIVIQKIGELWGGEVTDSLLHKLIVAPPTEDRHGDVYTNAALVVGKFKRKNPMEIAEHLRQALAEVEGVDSVDVVPPGFVNLKCSNEVWYSAIRDINKAGKDYGAVNLGQGQKVNVEFVSANPTGPLHIGHARGAVFGDVLSNLLAWVGYDVTREYYVNDAGGQINTLVESVYLRYKEALGEQVTIGEGLYPGEYLKPIAKALVEKHGDKLLASEDRTAVIREFALKSILDLIREDMALLGVKHDVFTYEADLQRSRTVEKCVEFLQQKGMLYYGTLERPRGVEEEAAWQAREQLLFRSTDFGDDSDRALQKEDGSWTYFAGDIAYHFDKISRGFHDMILGLGFDHKGYVSRLKAAVHALSDGKATIDVKLHNMVNFLENGVPVKMSKRRGEFLTARDVVEEVGKDVARFIMMTRKNDVVLDFDFAKAKEQSKDSQIFYIQYAHARACSLMRNAPTLLPIEDVDFSRVSSAPEIALIKLLVRWPNIVESSAVNHEPHRIAFYLLEVAEAFHVLWGHGSRSVDMRFIVEGDIATTSARIYLVKVVALVISLGLSIFSIAPMEEMR.

The short motif at 136-146 is the 'HIGH' region element; that stretch reads ANPTGPLHIGH.

This sequence belongs to the class-I aminoacyl-tRNA synthetase family. Monomer.

It localises to the cytoplasm. The enzyme catalyses tRNA(Arg) + L-arginine + ATP = L-arginyl-tRNA(Arg) + AMP + diphosphate. In Anaplasma marginale (strain St. Maries), this protein is Arginine--tRNA ligase.